The following is a 700-amino-acid chain: Glycine--tRNA ligase beta subunit (700 aa).

It belongs to the class-II aminoacyl-tRNA synthetase family. Tetramer of two alpha and two beta subunits.

It is found in the cytoplasm. It catalyses the reaction tRNA(Gly) + glycine + ATP = glycyl-tRNA(Gly) + AMP + diphosphate. This chain is Glycine--tRNA ligase beta subunit, found in Magnetococcus marinus (strain ATCC BAA-1437 / JCM 17883 / MC-1).